The primary structure comprises 291 residues: Phosphatidylserine decarboxylase proenzyme (291 aa).

Residues Asp90, His147, and Ser253 each act as charge relay system; for autoendoproteolytic cleavage activity in the active site. Ser253 serves as the catalytic Schiff-base intermediate with substrate; via pyruvic acid; for decarboxylase activity. Pyruvic acid (Ser); by autocatalysis is present on Ser253.

It belongs to the phosphatidylserine decarboxylase family. PSD-B subfamily. Prokaryotic type I sub-subfamily. Heterodimer of a large membrane-associated beta subunit and a small pyruvoyl-containing alpha subunit. Pyruvate serves as cofactor. Is synthesized initially as an inactive proenzyme. Formation of the active enzyme involves a self-maturation process in which the active site pyruvoyl group is generated from an internal serine residue via an autocatalytic post-translational modification. Two non-identical subunits are generated from the proenzyme in this reaction, and the pyruvate is formed at the N-terminus of the alpha chain, which is derived from the carboxyl end of the proenzyme. The autoendoproteolytic cleavage occurs by a canonical serine protease mechanism, in which the side chain hydroxyl group of the serine supplies its oxygen atom to form the C-terminus of the beta chain, while the remainder of the serine residue undergoes an oxidative deamination to produce ammonia and the pyruvoyl prosthetic group on the alpha chain. During this reaction, the Ser that is part of the protease active site of the proenzyme becomes the pyruvoyl prosthetic group, which constitutes an essential element of the active site of the mature decarboxylase.

The protein resides in the cell membrane. It catalyses the reaction a 1,2-diacyl-sn-glycero-3-phospho-L-serine + H(+) = a 1,2-diacyl-sn-glycero-3-phosphoethanolamine + CO2. The protein operates within phospholipid metabolism; phosphatidylethanolamine biosynthesis; phosphatidylethanolamine from CDP-diacylglycerol: step 2/2. In terms of biological role, catalyzes the formation of phosphatidylethanolamine (PtdEtn) from phosphatidylserine (PtdSer). The polypeptide is Phosphatidylserine decarboxylase proenzyme (Photobacterium profundum (strain SS9)).